Reading from the N-terminus, the 329-residue chain is Cytosolic arginine sensor for mTORC1 subunit 2 (329 aa).

ACT domains are found at residues 72–139 and 262–322; these read ADAT…MHTL and ELWK…NALQ.

This sequence belongs to the GATS family. In terms of assembly, may form homodimers and heterodimers.

It localises to the cytoplasm. The protein localises to the cytosol. Its function is as follows. Functions as a negative regulator of the TORC1 signaling pathway. The chain is Cytosolic arginine sensor for mTORC1 subunit 2 from Xenopus laevis (African clawed frog).